The primary structure comprises 234 residues: Small ribosomal subunit protein uS3 (234 aa).

A KH type-2 domain is found at 39 to 108 (IRKFVKKKLF…TVIVNVVEVK (70 aa)). Positions 212-234 (KGKNEETNNETADNSRGRRREAK) are disordered.

This sequence belongs to the universal ribosomal protein uS3 family. As to quaternary structure, part of the 30S ribosomal subunit. Forms a tight complex with proteins S10 and S14.

Binds the lower part of the 30S subunit head. Binds mRNA in the 70S ribosome, positioning it for translation. The polypeptide is Small ribosomal subunit protein uS3 (Alkaliphilus metalliredigens (strain QYMF)).